The following is a 388-amino-acid chain: Sporulation-specific mitogen-activated protein kinase SMK1 (388 aa).

The region spanning 38 to 337 (YEIIQFLGKG…VEQAISHPFL (300 aa)) is the Protein kinase domain. ATP contacts are provided by residues 44 to 52 (LGKGAYGTV) and Lys-69. Catalysis depends on Asp-166, which acts as the Proton acceptor. The TXY motif lies at 207-209 (TNY).

It belongs to the protein kinase superfamily. CMGC Ser/Thr protein kinase family. MAP kinase subfamily. Interacts with GSC2. Requires Mg(2+) as cofactor. Post-translationally, dually phosphorylated on Thr-207 and Tyr-209, which activates the enzyme.

It catalyses the reaction L-seryl-[protein] + ATP = O-phospho-L-seryl-[protein] + ADP + H(+). The enzyme catalyses L-threonyl-[protein] + ATP = O-phospho-L-threonyl-[protein] + ADP + H(+). Its activity is regulated as follows. Activated by tyrosine and threonine phosphorylation. Functionally, required for spore wall assembly. Required for proper deposition of the two outer layers of the spore wall, the chitosan and dityrosine layers. Negatively regulates GSC2, an alternate catalytic subunit of the 1,3-beta-glucan synthase (GS). Participates in a developmentally regulated signal transduction pathway that coordinates cytodifferentiation events with the transcriptional program. The chain is Sporulation-specific mitogen-activated protein kinase SMK1 (SMK1) from Saccharomyces cerevisiae (strain ATCC 204508 / S288c) (Baker's yeast).